We begin with the raw amino-acid sequence, 602 residues long: Arginine--tRNA ligase (602 aa).

Positions 132 to 142 (ANPTGPLHVGH) match the 'HIGH' region motif.

It belongs to the class-I aminoacyl-tRNA synthetase family. Monomer.

The protein resides in the cytoplasm. It carries out the reaction tRNA(Arg) + L-arginine + ATP = L-arginyl-tRNA(Arg) + AMP + diphosphate. The chain is Arginine--tRNA ligase from Cupriavidus metallidurans (strain ATCC 43123 / DSM 2839 / NBRC 102507 / CH34) (Ralstonia metallidurans).